A 181-amino-acid chain; its full sequence is Adenylate kinase (181 aa).

10–15 contributes to the ATP binding site; sequence GAGKGT. Positions 30–59 are NMP; sequence STGDLFRANIGQATALGVEAKKYIDAGELV. AMP-binding positions include Thr31, Arg36, 57–59, 85–88, and Gln92; these read ELV and GFPR. The tract at residues 126–132 is LID; it reads ARGRADD. Position 127 (Arg127) interacts with ATP. Residues Arg129 and Arg140 each contribute to the AMP site. ATP is bound at residue Gly166.

The protein belongs to the adenylate kinase family. In terms of assembly, monomer.

It localises to the cytoplasm. The catalysed reaction is AMP + ATP = 2 ADP. Its pathway is purine metabolism; AMP biosynthesis via salvage pathway; AMP from ADP: step 1/1. Functionally, catalyzes the reversible transfer of the terminal phosphate group between ATP and AMP. Plays an important role in cellular energy homeostasis and in adenine nucleotide metabolism. The sequence is that of Adenylate kinase from Rhodococcus erythropolis (strain PR4 / NBRC 100887).